Here is a 183-residue protein sequence, read N- to C-terminus: Probable GTP-binding protein EngB (183 aa).

An EngB-type G domain is found at 18-183; sequence DQNEIVFWGR…LSDLVEHFEL (166 aa). Residues 26–33, 52–56, 70–73, 137–140, and 166–168 each bind GTP; these read GRSNVGKS, GRTRL, DLPG, TKID, and VSS. Residues Ser33 and Thr54 each coordinate Mg(2+).

This sequence belongs to the TRAFAC class TrmE-Era-EngA-EngB-Septin-like GTPase superfamily. EngB GTPase family. Mg(2+) is required as a cofactor.

Necessary for normal cell division and for the maintenance of normal septation. The polypeptide is Probable GTP-binding protein EngB (Metamycoplasma arthritidis (strain 158L3-1) (Mycoplasma arthritidis)).